The primary structure comprises 108 residues: Inner membrane protein H108R (108 aa).

Residues 10-32 (LIVIITILITTRELSTTMLIVSL) form a helical membrane-spanning segment. The span at 49–64 (ENNTFSMPQKNSFNES) shows a compositional bias: polar residues. The interval 49–69 (ENNTFSMPQKNSFNESYNKDK) is disordered. N-linked (GlcNAc...) asparagine; by host glycosylation is found at N50 and N62.

The protein belongs to the asfivirus H108R family.

Its subcellular location is the virion membrane. The protein is Inner membrane protein H108R of African swine fever virus (strain Badajoz 1971 Vero-adapted) (Ba71V).